Here is an 85-residue protein sequence, read N- to C-terminus: Alpha-defensin 11 (85 aa).

A signal peptide spans Ala-1–Ala-11. Positions Asp-12 to Ser-50 are excised as a propeptide. Residues Ile-14 to Leu-46 form a disordered region. Cystine bridges form between Cys-56–Cys-84, Cys-58–Cys-73, and Cys-63–Cys-83.

It belongs to the alpha-defensin family. In terms of tissue distribution, paneth cells of the small bowel.

The protein resides in the secreted. Probably contributes to the antimicrobial barrier function of the small bowel mucosa. This is Alpha-defensin 11 (Defa11) from Mus musculus (Mouse).